Consider the following 317-residue polypeptide: Transaldolase (317 aa).

Catalysis depends on Lys-132, which acts as the Schiff-base intermediate with substrate.

This sequence belongs to the transaldolase family. Type 1 subfamily. As to quaternary structure, homodimer.

Its subcellular location is the cytoplasm. The enzyme catalyses D-sedoheptulose 7-phosphate + D-glyceraldehyde 3-phosphate = D-erythrose 4-phosphate + beta-D-fructose 6-phosphate. The protein operates within carbohydrate degradation; pentose phosphate pathway; D-glyceraldehyde 3-phosphate and beta-D-fructose 6-phosphate from D-ribose 5-phosphate and D-xylulose 5-phosphate (non-oxidative stage): step 2/3. Its function is as follows. Transaldolase is important for the balance of metabolites in the pentose-phosphate pathway. The protein is Transaldolase of Haemophilus influenzae (strain 86-028NP).